The primary structure comprises 182 residues: Dual-action ribosomal maturation protein DarP (182 aa).

The interval 1 to 20 (MNKQPEEWQDPQSLQQQDDE) is disordered.

This sequence belongs to the DarP family.

Its subcellular location is the cytoplasm. In terms of biological role, member of a network of 50S ribosomal subunit biogenesis factors which assembles along the 30S-50S interface, preventing incorrect 23S rRNA structures from forming. Promotes peptidyl transferase center (PTC) maturation. The polypeptide is Dual-action ribosomal maturation protein DarP (Sodalis glossinidius (strain morsitans)).